The primary structure comprises 1293 residues: Phosphoribosylformylglycinamidine synthase (1293 aa).

Residues 308–319 (GAATGAGGEIRD) and alanine 675 contribute to the ATP site. Mg(2+)-binding residues include aspartate 676, glutamate 715, asparagine 719, and aspartate 883. Residue serine 885 coordinates ATP. The Glutamine amidotransferase type-1 domain maps to 1040-1293 (MAILREQGVN…MFRNARKFIG (254 aa)). The active-site Nucleophile is the cysteine 1133. Catalysis depends on residues histidine 1258 and glutamate 1260.

The protein in the N-terminal section; belongs to the FGAMS family. In terms of assembly, monomer.

It is found in the cytoplasm. The catalysed reaction is N(2)-formyl-N(1)-(5-phospho-beta-D-ribosyl)glycinamide + L-glutamine + ATP + H2O = 2-formamido-N(1)-(5-O-phospho-beta-D-ribosyl)acetamidine + L-glutamate + ADP + phosphate + H(+). Its pathway is purine metabolism; IMP biosynthesis via de novo pathway; 5-amino-1-(5-phospho-D-ribosyl)imidazole from N(2)-formyl-N(1)-(5-phospho-D-ribosyl)glycinamide: step 1/2. Its function is as follows. Phosphoribosylformylglycinamidine synthase involved in the purines biosynthetic pathway. Catalyzes the ATP-dependent conversion of formylglycinamide ribonucleotide (FGAR) and glutamine to yield formylglycinamidine ribonucleotide (FGAM) and glutamate. The polypeptide is Phosphoribosylformylglycinamidine synthase (Methylobacillus flagellatus (strain ATCC 51484 / DSM 6875 / VKM B-1610 / KT)).